Consider the following 179-residue polypeptide: Large ribosomal subunit protein uL5 (179 aa).

Belongs to the universal ribosomal protein uL5 family. As to quaternary structure, part of the 50S ribosomal subunit; part of the 5S rRNA/L5/L18/L25 subcomplex. Contacts the 5S rRNA and the P site tRNA. Forms a bridge to the 30S subunit in the 70S ribosome.

Its function is as follows. This is one of the proteins that bind and probably mediate the attachment of the 5S RNA into the large ribosomal subunit, where it forms part of the central protuberance. In the 70S ribosome it contacts protein S13 of the 30S subunit (bridge B1b), connecting the 2 subunits; this bridge is implicated in subunit movement. Contacts the P site tRNA; the 5S rRNA and some of its associated proteins might help stabilize positioning of ribosome-bound tRNAs. In Synechococcus sp. (strain CC9311), this protein is Large ribosomal subunit protein uL5.